The primary structure comprises 76 residues: Large ribosomal subunit protein bL31 (76 aa).

This sequence belongs to the bacterial ribosomal protein bL31 family. Type A subfamily. Part of the 50S ribosomal subunit.

In terms of biological role, binds the 23S rRNA. The chain is Large ribosomal subunit protein bL31 from Rhizorhabdus wittichii (strain DSM 6014 / CCUG 31198 / JCM 15750 / NBRC 105917 / EY 4224 / RW1) (Sphingomonas wittichii).